A 331-amino-acid polypeptide reads, in one-letter code: Tetraacyldisaccharide 4'-kinase (331 aa).

57–64 (SVGGNGKT) contributes to the ATP binding site.

It belongs to the LpxK family.

The catalysed reaction is a lipid A disaccharide + ATP = a lipid IVA + ADP + H(+). Its pathway is glycolipid biosynthesis; lipid IV(A) biosynthesis; lipid IV(A) from (3R)-3-hydroxytetradecanoyl-[acyl-carrier-protein] and UDP-N-acetyl-alpha-D-glucosamine: step 6/6. Its function is as follows. Transfers the gamma-phosphate of ATP to the 4'-position of a tetraacyldisaccharide 1-phosphate intermediate (termed DS-1-P) to form tetraacyldisaccharide 1,4'-bis-phosphate (lipid IVA). This Histophilus somni (strain 2336) (Haemophilus somnus) protein is Tetraacyldisaccharide 4'-kinase.